The chain runs to 508 residues: Glycerol kinase (508 aa).

Threonine 14 is a binding site for ADP. 3 residues coordinate ATP: threonine 14, threonine 15, and serine 16. Residue threonine 14 participates in sn-glycerol 3-phosphate binding. Arginine 18 serves as a coordination point for ADP. Sn-glycerol 3-phosphate contacts are provided by arginine 84, glutamate 85, and tyrosine 136. Residues arginine 84, glutamate 85, and tyrosine 136 each contribute to the glycerol site. Phosphohistidine; by HPr is present on histidine 232. Aspartate 246 contributes to the sn-glycerol 3-phosphate binding site. Residues aspartate 246 and glutamine 247 each contribute to the glycerol site. The ADP site is built by threonine 268 and glycine 311. ATP contacts are provided by threonine 268, glycine 311, glutamine 315, and glycine 412. Residues glycine 412 and asparagine 416 each contribute to the ADP site.

It belongs to the FGGY kinase family. In terms of assembly, homotetramer and homodimer (in equilibrium). In terms of processing, the phosphoenolpyruvate-dependent sugar phosphotransferase system (PTS), including enzyme I, and histidine-containing protein (HPr) are required for the phosphorylation, which leads to the activation of the enzyme.

It carries out the reaction glycerol + ATP = sn-glycerol 3-phosphate + ADP + H(+). It functions in the pathway polyol metabolism; glycerol degradation via glycerol kinase pathway; sn-glycerol 3-phosphate from glycerol: step 1/1. Its activity is regulated as follows. Activated by phosphorylation and inhibited by fructose 1,6-bisphosphate (FBP). Its function is as follows. Key enzyme in the regulation of glycerol uptake and metabolism. Catalyzes the phosphorylation of glycerol to yield sn-glycerol 3-phosphate. This Streptococcus pyogenes serotype M3 (strain ATCC BAA-595 / MGAS315) protein is Glycerol kinase.